The chain runs to 106 residues: Cytochrome c3 (106 aa).

Residues His26, His29, Cys34, Cys37, His38, His39, Cys50, Cys55, His56, His75, Cys82, Cys85, His86, Cys98, Cys101, and His102 each contribute to the heme c site.

In terms of processing, binds 4 heme c groups per subunit.

Functionally, participates in sulfate respiration coupled with phosphorylation by transferring electrons from the enzyme dehydrogenase to ferredoxin. This is Cytochrome c3 from Maridesulfovibrio salexigens (Desulfovibrio salexigens).